A 595-amino-acid polypeptide reads, in one-letter code: Aspartate--tRNA(Asp/Asn) ligase (595 aa).

Glutamate 178 is an L-aspartate binding site. Residues 202-205 (QLFK) are aspartate. Arginine 224 serves as a coordination point for L-aspartate. Residues 224–226 (RDE) and glutamine 233 each bind ATP. Histidine 458 contacts L-aspartate. Glutamate 488 provides a ligand contact to ATP. Arginine 495 is an L-aspartate binding site. ATP is bound at residue 540–543 (GLDR).

This sequence belongs to the class-II aminoacyl-tRNA synthetase family. Type 1 subfamily. Homodimer.

It localises to the cytoplasm. It carries out the reaction tRNA(Asx) + L-aspartate + ATP = L-aspartyl-tRNA(Asx) + AMP + diphosphate. Functionally, aspartyl-tRNA synthetase with relaxed tRNA specificity since it is able to aspartylate not only its cognate tRNA(Asp) but also tRNA(Asn). Reaction proceeds in two steps: L-aspartate is first activated by ATP to form Asp-AMP and then transferred to the acceptor end of tRNA(Asp/Asn). The polypeptide is Aspartate--tRNA(Asp/Asn) ligase (Trichodesmium erythraeum (strain IMS101)).